The following is a 317-amino-acid chain: Pseudouridine-5'-phosphate glycosidase 1 (317 aa).

Catalysis depends on E40, which acts as the Proton donor. Positions 101 and 121 each coordinate substrate. Mn(2+) is bound at residue D153. Position 155-157 (155-157 (SAD)) interacts with substrate. K174 functions as the Nucleophile in the catalytic mechanism.

This sequence belongs to the pseudouridine-5'-phosphate glycosidase family. In terms of assembly, homotrimer. The cofactor is Mn(2+).

It catalyses the reaction D-ribose 5-phosphate + uracil = psi-UMP + H2O. Its function is as follows. Catalyzes the reversible cleavage of pseudouridine 5'-phosphate (PsiMP) to ribose 5-phosphate and uracil. Functions biologically in the cleavage direction, as part of a pseudouridine degradation pathway. This chain is Pseudouridine-5'-phosphate glycosidase 1, found in Rhizobium johnstonii (strain DSM 114642 / LMG 32736 / 3841) (Rhizobium leguminosarum bv. viciae).